Consider the following 259-residue polypeptide: UPF0246 protein PSPA7_1607 (259 aa).

It belongs to the UPF0246 family.

This Pseudomonas paraeruginosa (strain DSM 24068 / PA7) (Pseudomonas aeruginosa (strain PA7)) protein is UPF0246 protein PSPA7_1607.